A 195-amino-acid polypeptide reads, in one-letter code: MRLAEVVRNTSETQIRVKINLDGTGQQKLATGVPFLDHMLDQIARHGLFDLEIEAHGDLHIDDHHTVEDTGITLGQAVAKAIGDRKGIVRYGHSYVPLDEALSRVVIDFSGRPGLEFHVPFTRARIGTFDVDLSIEFFRGFVNHAGVTLHIDNLRGLNAHHQMETVFKAFGRALRMATELDERAAGQIPSTKGSL.

This sequence belongs to the imidazoleglycerol-phosphate dehydratase family.

The protein localises to the cytoplasm. It catalyses the reaction D-erythro-1-(imidazol-4-yl)glycerol 3-phosphate = 3-(imidazol-4-yl)-2-oxopropyl phosphate + H2O. It functions in the pathway amino-acid biosynthesis; L-histidine biosynthesis; L-histidine from 5-phospho-alpha-D-ribose 1-diphosphate: step 6/9. This chain is Imidazoleglycerol-phosphate dehydratase, found in Paraburkholderia phytofirmans (strain DSM 17436 / LMG 22146 / PsJN) (Burkholderia phytofirmans).